The chain runs to 398 residues: Acetate kinase (398 aa).

Residue Asn7 coordinates Mg(2+). Residue Lys14 coordinates ATP. Residue Arg91 coordinates substrate. Residue Asp148 is the Proton donor/acceptor of the active site. Residues 208 to 212 (HLGNG), 283 to 285 (DFR), and 331 to 335 (GLGEN) contribute to the ATP site. Glu384 is a binding site for Mg(2+).

This sequence belongs to the acetokinase family. Homodimer. Mg(2+) serves as cofactor. It depends on Mn(2+) as a cofactor.

It localises to the cytoplasm. It carries out the reaction acetate + ATP = acetyl phosphate + ADP. It functions in the pathway metabolic intermediate biosynthesis; acetyl-CoA biosynthesis; acetyl-CoA from acetate: step 1/2. Its function is as follows. Catalyzes the formation of acetyl phosphate from acetate and ATP. Can also catalyze the reverse reaction. This chain is Acetate kinase, found in Natranaerobius thermophilus (strain ATCC BAA-1301 / DSM 18059 / JW/NM-WN-LF).